A 102-amino-acid polypeptide reads, in one-letter code: Large ribosomal subunit protein uL24 (102 aa).

Belongs to the universal ribosomal protein uL24 family. Part of the 50S ribosomal subunit.

One of two assembly initiator proteins, it binds directly to the 5'-end of the 23S rRNA, where it nucleates assembly of the 50S subunit. Its function is as follows. One of the proteins that surrounds the polypeptide exit tunnel on the outside of the subunit. In Allorhizobium ampelinum (strain ATCC BAA-846 / DSM 112012 / S4) (Agrobacterium vitis (strain S4)), this protein is Large ribosomal subunit protein uL24.